We begin with the raw amino-acid sequence, 256 residues long: Adenosylcobinamide-GDP ribazoletransferase (256 aa).

A run of 6 helical transmembrane segments spans residues 40–60 (YFPL…WLVL), 64–84 (PAQG…TGAF), 114–134 (IGAF…QLLS), 143–163 (ILVA…SHLL), 194–214 (VVPL…GLIL), and 234–254 (CLGM…LAWM).

It belongs to the CobS family. It depends on Mg(2+) as a cofactor.

The protein localises to the cell inner membrane. It carries out the reaction alpha-ribazole + adenosylcob(III)inamide-GDP = adenosylcob(III)alamin + GMP + H(+). It catalyses the reaction alpha-ribazole 5'-phosphate + adenosylcob(III)inamide-GDP = adenosylcob(III)alamin 5'-phosphate + GMP + H(+). Its pathway is cofactor biosynthesis; adenosylcobalamin biosynthesis; adenosylcobalamin from cob(II)yrinate a,c-diamide: step 7/7. Its function is as follows. Joins adenosylcobinamide-GDP and alpha-ribazole to generate adenosylcobalamin (Ado-cobalamin). Also synthesizes adenosylcobalamin 5'-phosphate from adenosylcobinamide-GDP and alpha-ribazole 5'-phosphate. The protein is Adenosylcobinamide-GDP ribazoletransferase of Ralstonia pickettii (strain 12J).